A 533-amino-acid polypeptide reads, in one-letter code: uncharacterized protein (533 aa).

This is an uncharacterized protein from Clostridium beijerinckii (strain ATCC 51743 / NCIMB 8052) (Clostridium acetobutylicum).